A 177-amino-acid polypeptide reads, in one-letter code: GTP-dependent dephospho-CoA kinase (177 aa).

Residues Asp48, Val49, Val50, Asp67, Lys69, Glu124, and Asp147 each coordinate GTP.

The protein belongs to the GTP-dependent DPCK family.

It carries out the reaction 3'-dephospho-CoA + GTP = GDP + CoA + H(+). It participates in cofactor biosynthesis; coenzyme A biosynthesis. Its function is as follows. Catalyzes the GTP-dependent phosphorylation of the 3'-hydroxyl group of dephosphocoenzyme A to form coenzyme A (CoA). The chain is GTP-dependent dephospho-CoA kinase from Thermococcus onnurineus (strain NA1).